A 158-amino-acid chain; its full sequence is UPF0145 protein Psyc_1853 (158 aa).

Positions 113-122 are enriched in polar residues; sequence IYQSSNQPPS. Residues 113 to 158 are disordered; that stretch reads IYQSSNQPPSHHSGHSQYEEPVPSAAQPSTTAQANDDLPRFNPFGE.

Belongs to the UPF0145 family.

The sequence is that of UPF0145 protein Psyc_1853 from Psychrobacter arcticus (strain DSM 17307 / VKM B-2377 / 273-4).